The chain runs to 151 residues: Transcriptional repressor NrdR (151 aa).

The segment at Cys-3–Cys-34 is a zinc-finger region. Residues Ile-49 to Thr-139 form the ATP-cone domain.

Belongs to the NrdR family. It depends on Zn(2+) as a cofactor.

Its function is as follows. Negatively regulates transcription of bacterial ribonucleotide reductase nrd genes and operons by binding to NrdR-boxes. The sequence is that of Transcriptional repressor NrdR from Clostridium botulinum (strain Loch Maree / Type A3).